The chain runs to 120 residues: Crustacean hyperglycemic hormones 2 (120 aa).

Positions 1 to 27 (MIAFHMVWSALLASLLLLLLAPSASPV) are cleaved as a signal peptide. 3 disulfide bridges follow: cysteine 53/cysteine 89, cysteine 69/cysteine 85, and cysteine 72/cysteine 98. Valine 118 is subject to Valine amide.

This sequence belongs to the arthropod CHH/MIH/GIH/VIH hormone family.

The protein localises to the secreted. Functionally, hormone found in the sinus gland of isopods and decapods which controls the blood sugar level. Has a secretagogue action over the amylase released from the midgut gland. May act as a stress hormone and may be involved in the control of molting and reproduction. The protein is Crustacean hyperglycemic hormones 2 of Penaeus japonicus (Kuruma prawn).